A 643-amino-acid polypeptide reads, in one-letter code: Phosphomethylpyrimidine synthase (643 aa).

Residues N248, M277, Y306, H342, 362 to 364 (SRG), 403 to 406 (DGLR), and E442 contribute to the substrate site. H446 is a Zn(2+) binding site. Y469 is a binding site for substrate. Residue H510 participates in Zn(2+) binding. Positions 590, 593, and 598 each coordinate [4Fe-4S] cluster.

Belongs to the ThiC family. Homodimer. Requires [4Fe-4S] cluster as cofactor.

It carries out the reaction 5-amino-1-(5-phospho-beta-D-ribosyl)imidazole + S-adenosyl-L-methionine = 4-amino-2-methyl-5-(phosphooxymethyl)pyrimidine + CO + 5'-deoxyadenosine + formate + L-methionine + 3 H(+). Its pathway is cofactor biosynthesis; thiamine diphosphate biosynthesis. Its function is as follows. Catalyzes the synthesis of the hydroxymethylpyrimidine phosphate (HMP-P) moiety of thiamine from aminoimidazole ribotide (AIR) in a radical S-adenosyl-L-methionine (SAM)-dependent reaction. In Paraburkholderia xenovorans (strain LB400), this protein is Phosphomethylpyrimidine synthase.